The chain runs to 478 residues: Sporozoite surface protein P36p (478 aa).

An N-terminal signal peptide occupies residues 1 to 41 (MYVLVLIHMCYHFTMKRKKLFVYFIFLSFIINFNFNININF). 6-Cys domains follow at residues 42–178 (VCSN…IKKT) and 181–326 (KIKG…FDNN). Cystine bridges form between Cys-59–Cys-71, Cys-85–Cys-159, Cys-102–Cys-157, Cys-185–Cys-209, Cys-223–Cys-302, and Cys-243–Cys-300. Asn-109 and Asn-138 each carry an N-linked (GlcNAc...) asparagine glycan. N-linked (GlcNAc...) asparagine glycosylation is found at Asn-229, Asn-279, and Asn-291. A lipid anchor (GPI-anchor amidated serine) is attached at Ser-455. The propeptide at 456–478 (SSKYILFNNFLILFIFLIYIYST) is removed in mature form.

It is found in the cell surface. It localises to the cell membrane. Its function is as follows. Involved in sporozoite infection of hepatocytes and replication therein. The protein is Sporozoite surface protein P36p (PF52) of Plasmodium falciparum (isolate 3D7).